The sequence spans 132 residues: Small ribosomal subunit protein uS8 (132 aa).

Belongs to the universal ribosomal protein uS8 family. In terms of assembly, part of the 30S ribosomal subunit. Contacts proteins S5 and S12.

Its function is as follows. One of the primary rRNA binding proteins, it binds directly to 16S rRNA central domain where it helps coordinate assembly of the platform of the 30S subunit. In Lactococcus lactis subsp. lactis (strain IL1403) (Streptococcus lactis), this protein is Small ribosomal subunit protein uS8.